A 484-amino-acid chain; its full sequence is Adenylosuccinate lyase (484 aa).

The residue at position 2 (Ala2) is an N-acetylalanine. Residues 20-21 (RY), 85-87 (RHD), and 111-112 (TS) each bind substrate. N6-acetyllysine is present on Lys147. His159 (proton donor/acceptor) is an active-site residue. Position 241 (Gln241) interacts with substrate. Residue Ser289 is the Proton donor/acceptor of the active site. Lys295 is modified (N6-acetyllysine). Substrate is bound by residues Arg303, Arg329, Ser334, and Arg338. Lys415 is covalently cross-linked (Glycyl lysine isopeptide (Lys-Gly) (interchain with G-Cter in SUMO1)).

It belongs to the lyase 1 family. Adenylosuccinate lyase subfamily. Homotetramer. Residues from neighboring subunits contribute catalytic and substrate-binding residues to each active site. As to expression, ubiquitously expressed. Both isoforms are produced by all tissues. Isoform 2 is 10-fold less abundant than isoform 1.

It catalyses the reaction N(6)-(1,2-dicarboxyethyl)-AMP = fumarate + AMP. The enzyme catalyses (2S)-2-[5-amino-1-(5-phospho-beta-D-ribosyl)imidazole-4-carboxamido]succinate = 5-amino-1-(5-phospho-beta-D-ribosyl)imidazole-4-carboxamide + fumarate. Its pathway is purine metabolism; AMP biosynthesis via de novo pathway; AMP from IMP: step 2/2. It functions in the pathway purine metabolism; IMP biosynthesis via de novo pathway; 5-amino-1-(5-phospho-D-ribosyl)imidazole-4-carboxamide from 5-amino-1-(5-phospho-D-ribosyl)imidazole-4-carboxylate: step 2/2. Its activity is regulated as follows. The enzyme reaction kinetics indicate cooperativity between subunits. Its function is as follows. Catalyzes two non-sequential steps in de novo AMP synthesis: converts (S)-2-(5-amino-1-(5-phospho-D-ribosyl)imidazole-4-carboxamido)succinate (SAICAR) to fumarate plus 5-amino-1-(5-phospho-D-ribosyl)imidazole-4-carboxamide, and thereby also contributes to de novo IMP synthesis, and converts succinyladenosine monophosphate (SAMP) to AMP and fumarate. This chain is Adenylosuccinate lyase (ADSL), found in Homo sapiens (Human).